Here is a 278-residue protein sequence, read N- to C-terminus: HTH-type transcriptional regulator ExsA (278 aa).

An HTH araC/xylS-type domain is found at 171 to 269 (ERLQLFMEKH…GCTPSRSRQG (99 aa)). DNA-binding regions (H-T-H motif) lie at residues 188–209 (SDFSREFGMGLTTFKELFGSVY) and 236–259 (IVDIAMEAGFSSQSYFTQSYRRRF).

In terms of assembly, homodimer. Interacts with ExsD; this interaction inhibits ExsA activity.

With respect to regulation, in the absence of inducing signals such as low Ca(2+) or host cell contact, the T3SS/injectisome is expressed at a low basal level and exists in a quiescent state due to ExsA sequestration by ExsD in a 1:1 complex. Upon host cell contact, this interaction is disrupted by the anti-antiactivator protein ExsC leading to ExsA activation. Its function is as follows. Transcriptional regulator that plays an essential role in the activation the type III secretion system (T3SS) operons. In addition, ExsA directly regulates the transcription of ImpA virulence factor that cooperatively inhibits the functions of host macrophages together with the T3SS. The polypeptide is HTH-type transcriptional regulator ExsA (exsA) (Pseudomonas aeruginosa (strain ATCC 15692 / DSM 22644 / CIP 104116 / JCM 14847 / LMG 12228 / 1C / PRS 101 / PAO1)).